We begin with the raw amino-acid sequence, 99 residues long: METNSHFFYVLLCNDNSLYAGYTNDLQKRLKTHNEGKGAKYTRARRPVSLCHAESFETKREAMQAEYRFKQLTRKKKEQYIEEKRRSKEAVYVKTPDEF.

The 76-residue stretch at 4-79 folds into the GIY-YIG domain; that stretch reads NSHFFYVLLC…KQLTRKKKEQ (76 aa).

It belongs to the UPF0213 family.

The sequence is that of UPF0213 protein RBAM_000440 from Bacillus velezensis (strain DSM 23117 / BGSC 10A6 / LMG 26770 / FZB42) (Bacillus amyloliquefaciens subsp. plantarum).